A 590-amino-acid polypeptide reads, in one-letter code: Monoterepene synthase TPS1, chloropastic (590 aa).

Residues 1–42 (MALNTFLHFPPCSLSSFSCAVPKLPLAIFHKTMARQIRCPRA) constitute a chloroplast transit peptide. The (2E)-geranyl diphosphate site is built by Arg304, Asp341, Asp345, Arg483, and Asp486. Residues Asp341 and Asp345 each coordinate Mg(2+). The short motif at 341–345 (DDMYD) is the DDXXD motif element. The Mg(2+) site is built by Asp486, Thr490, and Glu494.

Belongs to the terpene synthase family. Tpsb subfamily. In terms of assembly, monomer. It depends on Mg(2+) as a cofactor.

It is found in the plastid. Its subcellular location is the chloroplast. The enzyme catalyses (2E)-geranyl diphosphate = beta-thujene + diphosphate. It catalyses the reaction (2E)-geranyl diphosphate = sabinene + diphosphate. It carries out the reaction (2E)-geranyl diphosphate = beta-pinene + diphosphate. The catalysed reaction is (2E)-geranyl diphosphate = alpha-terpinene + diphosphate. Its pathway is secondary metabolite biosynthesis; terpenoid biosynthesis. In terms of biological role, monoterpene synthase involved in the biosynthesis of volatile organic compounds. Mediates the conversion of (2E)-geranyl diphosphate (GPP) into beta-thujene, sabinene, beta-pinene and alpha-terpinene. Does not use (2E,6E)-farnesyl diphosphate (FPP) as substrate. The polypeptide is Monoterepene synthase TPS1, chloropastic (Cananga odorata (Ylang-ylang tree)).